The following is a 300-amino-acid chain: Ribonuclease HIII (300 aa).

One can recognise an RNase H type-2 domain in the interval 83–300 (IPIIGSDEVG…THKAQALLTK (218 aa)). Asp-89, Glu-90, and Asp-194 together coordinate a divalent metal cation.

This sequence belongs to the RNase HII family. RnhC subfamily. Mn(2+) serves as cofactor. Mg(2+) is required as a cofactor.

It is found in the cytoplasm. The enzyme catalyses Endonucleolytic cleavage to 5'-phosphomonoester.. Endonuclease that specifically degrades the RNA of RNA-DNA hybrids. The polypeptide is Ribonuclease HIII (Streptococcus pyogenes serotype M4 (strain MGAS10750)).